The following is a 196-amino-acid chain: ATP-dependent Clp protease proteolytic subunit (196 aa).

Ser-96 serves as the catalytic Nucleophile. His-121 is an active-site residue.

This sequence belongs to the peptidase S14 family. In terms of assembly, fourteen ClpP subunits assemble into 2 heptameric rings which stack back to back to give a disk-like structure with a central cavity, resembling the structure of eukaryotic proteasomes.

It is found in the cytoplasm. It carries out the reaction Hydrolysis of proteins to small peptides in the presence of ATP and magnesium. alpha-casein is the usual test substrate. In the absence of ATP, only oligopeptides shorter than five residues are hydrolyzed (such as succinyl-Leu-Tyr-|-NHMec, and Leu-Tyr-Leu-|-Tyr-Trp, in which cleavage of the -Tyr-|-Leu- and -Tyr-|-Trp bonds also occurs).. Its function is as follows. Cleaves peptides in various proteins in a process that requires ATP hydrolysis. Has a chymotrypsin-like activity. Plays a major role in the degradation of misfolded proteins. The sequence is that of ATP-dependent Clp protease proteolytic subunit from Streptococcus mutans serotype c (strain ATCC 700610 / UA159).